We begin with the raw amino-acid sequence, 29 residues long: Inorganic pyrophosphatase (29 aa).

It localises to the periplasm. It carries out the reaction diphosphate + H2O = 2 phosphate + H(+). Inorganic pyrophosphatase is an essential enzyme for the activation of sulfate by sulfate reducing bacteria. This is a high activity pyrophosphatase. In Nitratidesulfovibrio vulgaris (strain ATCC 29579 / DSM 644 / CCUG 34227 / NCIMB 8303 / VKM B-1760 / Hildenborough) (Desulfovibrio vulgaris), this protein is Inorganic pyrophosphatase.